The sequence spans 559 residues: DNA ligase (559 aa).

Glu-231 lines the ATP pocket. Residue Lys-233 is the N6-AMP-lysine intermediate of the active site. Residues Arg-238 and Glu-285 each coordinate ATP. Residues Glu-285 and Glu-379 each contribute to the Mg(2+) site. ATP-binding residues include Lys-384 and Lys-399.

It belongs to the ATP-dependent DNA ligase family. In terms of assembly, interacts with host TOP2A and TOP2B. Requires Mg(2+) as cofactor.

It localises to the host cytoplasm. It carries out the reaction ATP + (deoxyribonucleotide)n-3'-hydroxyl + 5'-phospho-(deoxyribonucleotide)m = (deoxyribonucleotide)n+m + AMP + diphosphate.. In terms of biological role, DNA ligase that seals nicks in double-stranded DNA during DNA replication, DNA recombination and DNA repair. Recruits cellular topoisomerase II to sites of viral replication and assembly. The protein is DNA ligase (OPG180) of Monkeypox virus.